A 214-amino-acid polypeptide reads, in one-letter code: Probable transaldolase (214 aa).

Lys83 (schiff-base intermediate with substrate) is an active-site residue.

It belongs to the transaldolase family. Type 3B subfamily.

It is found in the cytoplasm. The enzyme catalyses D-sedoheptulose 7-phosphate + D-glyceraldehyde 3-phosphate = D-erythrose 4-phosphate + beta-D-fructose 6-phosphate. Its pathway is carbohydrate degradation; pentose phosphate pathway; D-glyceraldehyde 3-phosphate and beta-D-fructose 6-phosphate from D-ribose 5-phosphate and D-xylulose 5-phosphate (non-oxidative stage): step 2/3. In terms of biological role, transaldolase is important for the balance of metabolites in the pentose-phosphate pathway. This Maridesulfovibrio salexigens (strain ATCC 14822 / DSM 2638 / NCIMB 8403 / VKM B-1763) (Desulfovibrio salexigens) protein is Probable transaldolase.